The primary structure comprises 493 residues: Cysteine sulfinic acid decarboxylase (493 aa).

Lysine 305 bears the N6-(pyridoxal phosphate)lysine mark.

It belongs to the group II decarboxylase family. As to quaternary structure, homodimer. Pyridoxal 5'-phosphate serves as cofactor. Expressed in brain, liver and kidney.

The catalysed reaction is L-aspartate + H(+) = beta-alanine + CO2. The enzyme catalyses 3-sulfino-L-alanine + H(+) = hypotaurine + CO2. It catalyses the reaction L-cysteate + H(+) = taurine + CO2. Its pathway is organosulfur biosynthesis; taurine biosynthesis; hypotaurine from L-cysteine: step 2/2. Its function is as follows. Catalyzes the decarboxylation of L-aspartate, 3-sulfino-L-alanine (cysteine sulfinic acid), and L-cysteate to beta-alanine, hypotaurine and taurine, respectively. The preferred substrate is 3-sulfino-L-alanine. Does not exhibit any decarboxylation activity toward glutamate. In Rattus norvegicus (Rat), this protein is Cysteine sulfinic acid decarboxylase (Csad).